Consider the following 316-residue polypeptide: Annexin D5 (316 aa).

N-acetylalanine is present on alanine 2. Annexin repeat units follow at residues 11 to 82 (PSPR…LWMP), 83 to 154 (EAVE…AYLN), 166 to 238 (ASVE…TILQ), and 242 to 313 (NSCF…SLLG). Ca(2+) contacts are provided by phenylalanine 24, glycine 26, glycine 28, and glutamate 68. Residue serine 95 is modified to Phosphoserine. Position 112 is a phosphothreonine (threonine 112). Glycine 259 is a binding site for Ca(2+). Residue tyrosine 284 is modified to Phosphotyrosine. Residues aspartate 299 and threonine 300 each contribute to the Ca(2+) site.

This sequence belongs to the annexin (TC 1.A.31.1) family. In terms of tissue distribution, expressed mainly in roots and flowers. Lower in stems and leaves.

This is Annexin D5 (ANN5) from Arabidopsis thaliana (Mouse-ear cress).